A 755-amino-acid polypeptide reads, in one-letter code: Proprotein convertase subtilisin/kexin type 4 (755 aa).

The signal sequence occupies residues 1-25 (MRPAPIALWLRLVLALALVRPRAVG). Positions 26–113 (WAPVRAPIYV…QQTLQRRVKR (88 aa)) are excised as a propeptide. Positions 126–440 (QWYMNSEAQP…YGLLDAGLLV (315 aa)) constitute a Peptidase S8 domain. Residues Asp158, His199, and Ser373 each act as charge relay system in the active site. The region spanning 449-581 (TQPQRKCAVR…TLLLYGTAED (133 aa)) is the P/Homo B domain. N-linked (GlcNAc...) asparagine glycans are attached at residues Asn475 and Asn629. A helical membrane pass occupies residues 709–729 (AMVLSLLAVTLGGPVLCGMSM).

It belongs to the peptidase S8 family. Furin subfamily. The proPCSK4 form interacts with HSPA5; the interaction takes place at the endoplasmic reticulum. Post-translationally, N-glycosylated. Synthesized in the endoplasmic reticulum as a zymogen, is matured by autocatalytic cleavage between the prodomain and the catalytic domain. In terms of tissue distribution, placenta.

The protein resides in the membrane. Its subcellular location is the cytoplasmic vesicle. It is found in the secretory vesicle. The protein localises to the acrosome membrane. Proprotein convertase involved in the processing of hormone and other protein precursors at sites comprised of pairs of basic amino acid residues. In males, important for ADAM2 processing as well as other acrosomal proteins with roles in fertilization and critical for normal fertilization events such as sperm capacitation, acrosome reaction and binding of sperm to zona pellucida. Also plays a role in female fertility, involved in the regulation of trophoblast migration and placental development, may be through the proteolytical processing and activation of proteins such as IGF2. May also participate in folliculogenesis in the ovaries. The protein is Proprotein convertase subtilisin/kexin type 4 of Homo sapiens (Human).